The chain runs to 142 residues: Peptide methionine sulfoxide reductase MsrB (142 aa).

The region spanning 2-125 is the MsrB domain; sequence LKKDKSELTD…NSAAIQFIPY (124 aa). The Nucleophile role is filled by Cys-114.

Belongs to the MsrB Met sulfoxide reductase family.

The enzyme catalyses L-methionyl-[protein] + [thioredoxin]-disulfide + H2O = L-methionyl-(R)-S-oxide-[protein] + [thioredoxin]-dithiol. This chain is Peptide methionine sulfoxide reductase MsrB, found in Staphylococcus aureus (strain bovine RF122 / ET3-1).